The primary structure comprises 93 residues: PqqA binding protein (93 aa).

The protein belongs to the PqqD family. Monomer. Interacts with PqqE.

It participates in cofactor biosynthesis; pyrroloquinoline quinone biosynthesis. Functions as a PqqA binding protein and presents PqqA to PqqE, in the pyrroloquinoline quinone (PQQ) biosynthetic pathway. The sequence is that of PqqA binding protein from Methylococcus capsulatus (strain ATCC 33009 / NCIMB 11132 / Bath).